A 546-amino-acid chain; its full sequence is Chaperonin GroEL 4 (546 aa).

Residues 30–33 (TLGP), lysine 51, 87–91 (DGTTT), glycine 415, and aspartate 495 contribute to the ATP site. The disordered stretch occupies residues 524-546 (APKDTPAAGQPGGPGAGGPGLDF). Positions 533–546 (QPGGPGAGGPGLDF) are enriched in gly residues.

It belongs to the chaperonin (HSP60) family. In terms of assembly, forms a cylinder of 14 subunits composed of two heptameric rings stacked back-to-back. Interacts with the co-chaperonin GroES.

It localises to the cytoplasm. The catalysed reaction is ATP + H2O + a folded polypeptide = ADP + phosphate + an unfolded polypeptide.. Functionally, together with its co-chaperonin GroES, plays an essential role in assisting protein folding. The GroEL-GroES system forms a nano-cage that allows encapsulation of the non-native substrate proteins and provides a physical environment optimized to promote and accelerate protein folding. The protein is Chaperonin GroEL 4 of Paraburkholderia xenovorans (strain LB400).